The following is a 97-amino-acid chain: uncharacterized protein (97 aa).

This is an uncharacterized protein from Mycobacterium tuberculosis (strain CDC 1551 / Oshkosh).